Reading from the N-terminus, the 94-residue chain is YcgL domain-containing protein VP0875 (94 aa).

A YcgL domain is found at 1–84 (MLCSIYKSSK…PPENLLEKYK (84 aa)).

The protein is YcgL domain-containing protein VP0875 of Vibrio parahaemolyticus serotype O3:K6 (strain RIMD 2210633).